The chain runs to 625 residues: Phosphomethylpyrimidine synthase (625 aa).

Substrate is bound by residues Asn230, Met259, Tyr288, His324, 344-346 (SRG), 385-388 (DGLR), and Glu424. His428 is a binding site for Zn(2+). A substrate-binding site is contributed by Tyr451. Residue His492 coordinates Zn(2+). [4Fe-4S] cluster-binding residues include Cys572, Cys575, and Cys580.

It belongs to the ThiC family. In terms of assembly, homodimer. It depends on [4Fe-4S] cluster as a cofactor.

It catalyses the reaction 5-amino-1-(5-phospho-beta-D-ribosyl)imidazole + S-adenosyl-L-methionine = 4-amino-2-methyl-5-(phosphooxymethyl)pyrimidine + CO + 5'-deoxyadenosine + formate + L-methionine + 3 H(+). The protein operates within cofactor biosynthesis; thiamine diphosphate biosynthesis. Functionally, catalyzes the synthesis of the hydroxymethylpyrimidine phosphate (HMP-P) moiety of thiamine from aminoimidazole ribotide (AIR) in a radical S-adenosyl-L-methionine (SAM)-dependent reaction. This chain is Phosphomethylpyrimidine synthase, found in Xanthomonas oryzae pv. oryzae (strain MAFF 311018).